The sequence spans 257 residues: MIGRERMTVASQRLIAERTYELTLSGRLVQEMRQPGQFVHVKVAASADPLLRRPLSLCHIDHKQGQCTIIYRQEGKGTALLAQKQPGDTVDVLGPLGNGFPLEAAPADSRALLVGGGIGVPPLYELAKQLTKRGVKVVSVLGFQTKAAVFYEEEFAAFGETHVATDDGSHGTAGRVTDVIEARSLEFDVLYACGPKPMLRALAERFPNRPVYLSLEERMGCGVGACFACVCHVPGSETAYKKVCSDGPVFRAGEVVL.

The FAD-binding FR-type domain occupies 2–102 (IGRERMTVAS…LGPLGNGFPL (101 aa)). Residues 53 to 56 (RPLS), 70 to 72 (IYR), and 77 to 78 (GT) contribute to the FAD site. [2Fe-2S] cluster-binding residues include cysteine 221, cysteine 226, cysteine 229, and cysteine 244.

It belongs to the PyrK family. As to quaternary structure, heterotetramer of 2 PyrK and 2 PyrD type B subunits. It depends on [2Fe-2S] cluster as a cofactor. The cofactor is FAD.

Its pathway is pyrimidine metabolism; UMP biosynthesis via de novo pathway; orotate from (S)-dihydroorotate (NAD(+) route): step 1/1. Functionally, responsible for channeling the electrons from the oxidation of dihydroorotate from the FMN redox center in the PyrD type B subunit to the ultimate electron acceptor NAD(+). The sequence is that of Dihydroorotate dehydrogenase B (NAD(+)), electron transfer subunit from Geobacillus kaustophilus (strain HTA426).